The primary structure comprises 60 residues: UPF0434 protein NMCC_0628 (60 aa).

The protein belongs to the UPF0434 family.

The chain is UPF0434 protein NMCC_0628 from Neisseria meningitidis serogroup C (strain 053442).